Here is a 339-residue protein sequence, read N- to C-terminus: MERYEVIKDIGSGNFGVAKLVRDVRTKELFAVKFIERGQKIDENVQREIMNHRSLRHPNIVRFKEVVLTPTHLAIVMEYAAGGELFERICSAGRFSEDEARFFFQQLISGVSYCHSMQICHRDLKLENTLLDGSIAPRLKICDFGYSKSSVLHSQPKSTVGTPAYIAPEVLARKEYDGKVADVWSCGVTLYVMLVGAYPFEDPDEPRNFRKTITRILSVQYMVPDYVRVSMECRHLLSRIFVANPEQRITIPEIKNHPWFLKNLPIEMTDEYQMSVQMNDINTPSQGLEEIMAIIQEARKPGDGSKFSGQIPGLGSMELDDIDTDDIDVEDSGDFVCAL.

In terms of domain architecture, Protein kinase spans 4-260; that stretch reads YEVIKDIGSG…IPEIKNHPWF (257 aa). Residues 10 to 18 and Lys33 each bind ATP; that span reads IGSGNFGVA. The Proton acceptor role is filled by Asp123. Residues 253 to 339 form a C-terminal region; the sequence is EIKNHPWFLK…EDSGDFVCAL (87 aa).

The protein belongs to the protein kinase superfamily. Ser/Thr protein kinase family. Phosphorylated.

The catalysed reaction is L-seryl-[protein] + ATP = O-phospho-L-seryl-[protein] + ADP + H(+). It carries out the reaction L-threonyl-[protein] + ATP = O-phospho-L-threonyl-[protein] + ADP + H(+). Its function is as follows. May play a role in signal transduction of hyperosmotic response. Can phosphorylate BZIP46 in vitro. The chain is Serine/threonine-protein kinase SAPK2 (SAPK2) from Oryza sativa subsp. indica (Rice).